The sequence spans 275 residues: Glutamate racemase (275 aa).

Residues 22–23 and 54–55 each bind substrate; these read DS and YG. Catalysis depends on cysteine 85, which acts as the Proton donor/acceptor. 86-87 provides a ligand contact to substrate; the sequence is NT. The active-site Proton donor/acceptor is the cysteine 196. 197–198 is a substrate binding site; sequence TH.

This sequence belongs to the aspartate/glutamate racemases family.

It catalyses the reaction L-glutamate = D-glutamate. Its pathway is cell wall biogenesis; peptidoglycan biosynthesis. Provides the (R)-glutamate required for cell wall biosynthesis. The chain is Glutamate racemase from Pseudomonas syringae pv. tomato (strain ATCC BAA-871 / DC3000).